The chain runs to 104 residues: MQSGKNAAASAKETAANVAASAKAGMEKTKASLQEKGEKMTAHDPMQKEMAREKKEERKHEAEYEKQAAKEHNAAQKQTTGIGTGTHSYTTTNVTGHRTGTGGI.

Residues 1 to 24 (MQSGKNAAASAKETAANVAASAKA) are compositionally biased toward low complexity. Residues 1-104 (MQSGKNAAAS…TGHRTGTGGI (104 aa)) form a disordered region. A compositionally biased stretch (basic and acidic residues) spans 25 to 74 (GMEKTKASLQEKGEKMTAHDPMQKEMAREKKEERKHEAEYEKQAAKEHNA). Polar residues predominate over residues 75-89 (AQKQTTGIGTGTHSY).

The protein belongs to the LEA type 1 family. In terms of tissue distribution, maximally expressed in dry seeds. Also present in mid-maturation embryos.

LEA proteins are late embryonic proteins abundant in higher plant seed embryos. They may play an essential role in seed survival and in controlling water exchanges during seed desiccation and imbibition. This is 11 kDa late embryogenesis abundant protein from Helianthus annuus (Common sunflower).